Consider the following 221-residue polypeptide: Histidine biosynthesis bifunctional protein HisIE (221 aa).

A phosphoribosyl-AMP cyclohydrolase region spans residues 1-121; that stretch reads MNITKIDWQK…KKQQFANWAW (121 aa). Residues 122 to 221 are phosphoribosyl-ATP pyrophosphohydrolase; the sequence is FIKLEQHLKE…IGLHPEGGNK (100 aa).

This sequence in the N-terminal section; belongs to the PRA-CH family. The protein in the C-terminal section; belongs to the PRA-PH family.

It localises to the cytoplasm. It carries out the reaction 1-(5-phospho-beta-D-ribosyl)-ATP + H2O = 1-(5-phospho-beta-D-ribosyl)-5'-AMP + diphosphate + H(+). It catalyses the reaction 1-(5-phospho-beta-D-ribosyl)-5'-AMP + H2O = 1-(5-phospho-beta-D-ribosyl)-5-[(5-phospho-beta-D-ribosylamino)methylideneamino]imidazole-4-carboxamide. It functions in the pathway amino-acid biosynthesis; L-histidine biosynthesis; L-histidine from 5-phospho-alpha-D-ribose 1-diphosphate: step 2/9. The protein operates within amino-acid biosynthesis; L-histidine biosynthesis; L-histidine from 5-phospho-alpha-D-ribose 1-diphosphate: step 3/9. This chain is Histidine biosynthesis bifunctional protein HisIE (hisI), found in Haemophilus influenzae (strain ATCC 51907 / DSM 11121 / KW20 / Rd).